A 183-amino-acid chain; its full sequence is Beta-defensin 129 (183 aa).

A signal peptide spans 1–19 (MKLLFPIFASLMLQYQVNT). Cystine bridges form between Cys-27–Cys-53, Cys-34–Cys-48, and Cys-38–Cys-54. A disordered region spans residues 141–183 (TATSTKSNTKESRDSATASSPPAPPPPNILPTPSLELEEAEEQ). Pro residues predominate over residues 161-170 (PPAPPPPNIL).

Belongs to the beta-defensin family.

The protein resides in the secreted. Its function is as follows. Has antibacterial activity. This is Beta-defensin 129 (DEFB129) from Gorilla gorilla gorilla (Western lowland gorilla).